A 276-amino-acid chain; its full sequence is Large ribosomal subunit protein uL2 (276 aa).

Disordered regions lie at residues 33-55 and 221-276; these read LVEA…RHIG and RGTA…AKKK.

It belongs to the universal ribosomal protein uL2 family. In terms of assembly, part of the 50S ribosomal subunit. Forms a bridge to the 30S subunit in the 70S ribosome.

Its function is as follows. One of the primary rRNA binding proteins. Required for association of the 30S and 50S subunits to form the 70S ribosome, for tRNA binding and peptide bond formation. It has been suggested to have peptidyltransferase activity; this is somewhat controversial. Makes several contacts with the 16S rRNA in the 70S ribosome. This chain is Large ribosomal subunit protein uL2, found in Psychrobacter sp. (strain PRwf-1).